A 333-amino-acid polypeptide reads, in one-letter code: Protein XAP5 CIRCADIAN TIMEKEEPER (333 aa).

Coiled-coil stretches lie at residues 12-43 and 70-116; these read AQDA…SDGQ and TREQ…VRGD. Residues 89–98 show a composition bias toward basic and acidic residues; the sequence is EKEKLQKLQQ. The interval 89–171 is disordered; it reads EKEKLQKLQQ…REREAEEQAE (83 aa). Over residues 123 to 136 the composition is skewed to acidic residues; sequence DEIENGSDEDEFEN. Residues 160–171 show a composition bias toward basic and acidic residues; that stretch reads PDREREAEEQAE.

Belongs to the FAM50 family.

Its subcellular location is the nucleus. Functionally, involved in light regulation of the circadian clock and photomorphogenesis. The protein is Protein XAP5 CIRCADIAN TIMEKEEPER (XCT) of Oryza sativa subsp. indica (Rice).